The following is a 338-amino-acid chain: Ornithine carbamoyltransferase (338 aa).

Carbamoyl phosphate is bound by residues 56–59 (STRT), Q83, R107, and 134–137 (HPTQ). L-ornithine is bound by residues N168, D232, and 236–237 (SM). Carbamoyl phosphate is bound by residues 274-275 (CL) and R320.

The protein belongs to the aspartate/ornithine carbamoyltransferase superfamily. OTCase family.

The protein localises to the cytoplasm. The enzyme catalyses carbamoyl phosphate + L-ornithine = L-citrulline + phosphate + H(+). It participates in amino-acid biosynthesis; L-arginine biosynthesis; L-arginine from L-ornithine and carbamoyl phosphate: step 1/3. In terms of biological role, reversibly catalyzes the transfer of the carbamoyl group from carbamoyl phosphate (CP) to the N(epsilon) atom of ornithine (ORN) to produce L-citrulline. The chain is Ornithine carbamoyltransferase from Photorhabdus laumondii subsp. laumondii (strain DSM 15139 / CIP 105565 / TT01) (Photorhabdus luminescens subsp. laumondii).